Consider the following 131-residue polypeptide: Fumarate reductase subunit C (131 aa).

A run of 3 helical transmembrane segments spans residues 30–50, 58–78, and 109–129; these read EGTC…VFAL, AGFV…VTLI, and IVRG…AVAL.

Belongs to the FrdC family. Part of an enzyme complex containing four subunits: a flavoprotein (FrdA), an iron-sulfur protein (FrdB), and two hydrophobic anchor proteins (FrdC and FrdD).

Its subcellular location is the cell inner membrane. Two distinct, membrane-bound, FAD-containing enzymes are responsible for the catalysis of fumarate and succinate interconversion; fumarate reductase is used in anaerobic growth, and succinate dehydrogenase is used in aerobic growth. Anchors the catalytic components of the fumarate reductase complex to the cell inner membrane, binds quinones. This Proteus mirabilis (strain HI4320) protein is Fumarate reductase subunit C.